The primary structure comprises 159 residues: NADH-quinone oxidoreductase subunit I (159 aa).

4Fe-4S ferredoxin-type domains follow at residues 51-80 (RRYE…IEAD) and 90-119 (TRYD…EGPN). Residues cysteine 60, cysteine 63, cysteine 66, cysteine 70, cysteine 99, cysteine 102, cysteine 105, and cysteine 109 each contribute to the [4Fe-4S] cluster site.

This sequence belongs to the complex I 23 kDa subunit family. In terms of assembly, NDH-1 is composed of 14 different subunits. Subunits NuoA, H, J, K, L, M, N constitute the membrane sector of the complex. The cofactor is [4Fe-4S] cluster.

The protein resides in the cell inner membrane. It catalyses the reaction a quinone + NADH + 5 H(+)(in) = a quinol + NAD(+) + 4 H(+)(out). In terms of biological role, NDH-1 shuttles electrons from NADH, via FMN and iron-sulfur (Fe-S) centers, to quinones in the respiratory chain. The immediate electron acceptor for the enzyme in this species is believed to be ubiquinone. Couples the redox reaction to proton translocation (for every two electrons transferred, four hydrogen ions are translocated across the cytoplasmic membrane), and thus conserves the redox energy in a proton gradient. This chain is NADH-quinone oxidoreductase subunit I, found in Rickettsia felis (strain ATCC VR-1525 / URRWXCal2) (Rickettsia azadi).